We begin with the raw amino-acid sequence, 513 residues long: GMP synthase [glutamine-hydrolyzing] (513 aa).

The 191-residue stretch at 8 to 198 folds into the Glutamine amidotransferase type-1 domain; the sequence is KIIVLDYGSQ…ALNICGAKGN (191 aa). Residue C85 is the Nucleophile of the active site. Active-site residues include H172 and E174. The GMPS ATP-PPase domain occupies 199-388; the sequence is WSMENFIDMQ…LGMPDEIVWR (190 aa). 226–232 is a binding site for ATP; that stretch reads SGGVDSS.

As to quaternary structure, homodimer.

The catalysed reaction is XMP + L-glutamine + ATP + H2O = GMP + L-glutamate + AMP + diphosphate + 2 H(+). It functions in the pathway purine metabolism; GMP biosynthesis; GMP from XMP (L-Gln route): step 1/1. Catalyzes the synthesis of GMP from XMP. The protein is GMP synthase [glutamine-hydrolyzing] (guaA) of Lactococcus lactis subsp. cremoris (strain MG1363).